A 206-amino-acid chain; its full sequence is Probable thymidylate kinase (206 aa).

Residue 10 to 17 participates in ATP binding; it reads GIDGSGKS.

This sequence belongs to the thymidylate kinase family.

The enzyme catalyses dTMP + ATP = dTDP + ADP. The chain is Probable thymidylate kinase from Methanosarcina acetivorans (strain ATCC 35395 / DSM 2834 / JCM 12185 / C2A).